The primary structure comprises 372 residues: N-methyl-L-tryptophan oxidase (372 aa).

FAD is bound at residue 4-34 (DLIIIGSGSVGAAAGYYATRAGLKVLMTDAH). Residue Cys307 is modified to S-8alpha-FAD cysteine.

This sequence belongs to the MSOX/MTOX family. MTOX subfamily. In terms of assembly, monomer. The cofactor is FAD.

It carries out the reaction N(alpha)-methyl-L-tryptophan + O2 + H2O = L-tryptophan + formaldehyde + H2O2. Functionally, catalyzes the oxidative demethylation of N-methyl-L-tryptophan. The sequence is that of N-methyl-L-tryptophan oxidase from Salmonella agona (strain SL483).